An 89-amino-acid chain; its full sequence is Small ribosomal subunit protein uS15 (89 aa).

Belongs to the universal ribosomal protein uS15 family. Part of the 30S ribosomal subunit. Forms a bridge to the 50S subunit in the 70S ribosome, contacting the 23S rRNA.

Its function is as follows. One of the primary rRNA binding proteins, it binds directly to 16S rRNA where it helps nucleate assembly of the platform of the 30S subunit by binding and bridging several RNA helices of the 16S rRNA. In terms of biological role, forms an intersubunit bridge (bridge B4) with the 23S rRNA of the 50S subunit in the ribosome. This is Small ribosomal subunit protein uS15 from Roseiflexus castenholzii (strain DSM 13941 / HLO8).